The chain runs to 103 residues: Pyrimidine/purine nucleoside phosphorylase (103 aa).

The protein belongs to the nucleoside phosphorylase PpnP family.

The enzyme catalyses a purine D-ribonucleoside + phosphate = a purine nucleobase + alpha-D-ribose 1-phosphate. The catalysed reaction is adenosine + phosphate = alpha-D-ribose 1-phosphate + adenine. It catalyses the reaction cytidine + phosphate = cytosine + alpha-D-ribose 1-phosphate. It carries out the reaction guanosine + phosphate = alpha-D-ribose 1-phosphate + guanine. The enzyme catalyses inosine + phosphate = alpha-D-ribose 1-phosphate + hypoxanthine. The catalysed reaction is thymidine + phosphate = 2-deoxy-alpha-D-ribose 1-phosphate + thymine. It catalyses the reaction uridine + phosphate = alpha-D-ribose 1-phosphate + uracil. It carries out the reaction xanthosine + phosphate = alpha-D-ribose 1-phosphate + xanthine. Its function is as follows. Catalyzes the phosphorolysis of diverse nucleosides, yielding D-ribose 1-phosphate and the respective free bases. Can use uridine, adenosine, guanosine, cytidine, thymidine, inosine and xanthosine as substrates. Also catalyzes the reverse reactions. This is Pyrimidine/purine nucleoside phosphorylase from Shewanella oneidensis (strain ATCC 700550 / JCM 31522 / CIP 106686 / LMG 19005 / NCIMB 14063 / MR-1).